The sequence spans 251 residues: DNA repair protein RecO (251 aa).

It belongs to the RecO family.

In terms of biological role, involved in DNA repair and RecF pathway recombination. The chain is DNA repair protein RecO from Staphylococcus saprophyticus subsp. saprophyticus (strain ATCC 15305 / DSM 20229 / NCIMB 8711 / NCTC 7292 / S-41).